The primary structure comprises 266 residues: Putative carbamate hydrolase RutD (266 aa).

An AB hydrolase-1 domain is found at 15–128 (AVLLSSGLGG…NAHSARCFDA (114 aa)).

The protein belongs to the AB hydrolase superfamily. Hydrolase RutD family.

The catalysed reaction is carbamate + 2 H(+) = NH4(+) + CO2. In terms of biological role, involved in pyrimidine catabolism. May facilitate the hydrolysis of carbamate, a reaction that can also occur spontaneously. This Variovorax paradoxus (strain S110) protein is Putative carbamate hydrolase RutD.